Reading from the N-terminus, the 473-residue chain is 3-oxoacyl-[acyl-carrier-protein] synthase I, chloroplastic (473 aa).

Positions Met1–Arg10 are enriched in polar residues. The disordered stretch occupies residues Met1–His26. A chloroplast-targeting transit peptide spans Met1–Ser46. Residues Lys60–Ala470 enclose the Ketosynthase family 3 (KS3) domain. Active-site for beta-ketoacyl synthase activity residues include Cys224, His364, and His400.

This sequence belongs to the thiolase-like superfamily. Beta-ketoacyl-ACP synthases family. In terms of assembly, homodimer.

It is found in the plastid. The protein resides in the chloroplast stroma. It carries out the reaction a fatty acyl-[ACP] + malonyl-[ACP] + H(+) = a 3-oxoacyl-[ACP] + holo-[ACP] + CO2. In terms of biological role, catalyzes the condensation reaction of fatty acid synthesis by the addition to an acyl acceptor of two carbons from malonyl-ACP. Specific for elongation from C-10 to unsaturated C-16 and C-18 fatty acids. This is 3-oxoacyl-[acyl-carrier-protein] synthase I, chloroplastic (KAS1) from Arabidopsis thaliana (Mouse-ear cress).